The chain runs to 161 residues: Ribonuclease P protein component (161 aa).

The protein belongs to the RnpA family. In terms of assembly, consists of a catalytic RNA component (M1 or rnpB) and a protein subunit.

It catalyses the reaction Endonucleolytic cleavage of RNA, removing 5'-extranucleotides from tRNA precursor.. RNaseP catalyzes the removal of the 5'-leader sequence from pre-tRNA to produce the mature 5'-terminus. It can also cleave other RNA substrates such as 4.5S RNA. The protein component plays an auxiliary but essential role in vivo by binding to the 5'-leader sequence and broadening the substrate specificity of the ribozyme. In Helicobacter pylori (strain Shi470), this protein is Ribonuclease P protein component.